The sequence spans 178 residues: Pyruvate synthase subunit PorC (178 aa).

Heterotetramer of one alpha, one beta, one delta and one gamma chain.

The catalysed reaction is 2 oxidized [2Fe-2S]-[ferredoxin] + pyruvate + CoA = 2 reduced [2Fe-2S]-[ferredoxin] + acetyl-CoA + CO2 + H(+). The chain is Pyruvate synthase subunit PorC (porC) from Methanocaldococcus jannaschii (strain ATCC 43067 / DSM 2661 / JAL-1 / JCM 10045 / NBRC 100440) (Methanococcus jannaschii).